Here is a 436-residue protein sequence, read N- to C-terminus: 3-ketoacyl-CoA thiolase (436 aa).

The active-site Acyl-thioester intermediate is the Cys-99. Residues His-392 and Cys-422 each act as proton acceptor in the active site.

It belongs to the thiolase-like superfamily. Thiolase family. Heterotetramer of two alpha chains (FadJ) and two beta chains (FadI).

The protein localises to the cytoplasm. The enzyme catalyses an acyl-CoA + acetyl-CoA = a 3-oxoacyl-CoA + CoA. It participates in lipid metabolism; fatty acid beta-oxidation. Functionally, catalyzes the final step of fatty acid oxidation in which acetyl-CoA is released and the CoA ester of a fatty acid two carbons shorter is formed. The sequence is that of 3-ketoacyl-CoA thiolase from Shewanella sp. (strain ANA-3).